A 188-amino-acid chain; its full sequence is Adenine phosphoribosyltransferase (188 aa).

This sequence belongs to the purine/pyrimidine phosphoribosyltransferase family. Homodimer.

The protein resides in the cytoplasm. The catalysed reaction is AMP + diphosphate = 5-phospho-alpha-D-ribose 1-diphosphate + adenine. It participates in purine metabolism; AMP biosynthesis via salvage pathway; AMP from adenine: step 1/1. In terms of biological role, catalyzes a salvage reaction resulting in the formation of AMP, that is energically less costly than de novo synthesis. The protein is Adenine phosphoribosyltransferase of Burkholderia multivorans (strain ATCC 17616 / 249).